The following is a 221-amino-acid chain: Guanylate kinase (221 aa).

Positions 18 to 196 (GFLFILSSPS…SASLIKSIYL (179 aa)) constitute a Guanylate kinase-like domain. 25 to 32 (SPSGAGKS) contributes to the ATP binding site.

It belongs to the guanylate kinase family.

The protein resides in the cytoplasm. It catalyses the reaction GMP + ATP = GDP + ADP. Essential for recycling GMP and indirectly, cGMP. The chain is Guanylate kinase from Bartonella quintana (strain Toulouse) (Rochalimaea quintana).